The primary structure comprises 409 residues: Beta-glucanase (409 aa).

The first 31 residues, Met-1–Ala-31, serve as a signal peptide directing secretion. Glu-95 acts as the Proton donor in catalysis. Asp-156 serves as the catalytic Nucleophile.

It belongs to the glycosyl hydrolase 8 (cellulase D) family.

It catalyses the reaction Hydrolysis of (1-&gt;4)-beta-D-glucosidic linkages in beta-D-glucans containing (1-&gt;3)- and (1-&gt;4)-bonds.. The polypeptide is Beta-glucanase (bgc) (Niallia circulans (Bacillus circulans)).